The chain runs to 130 residues: Iron-sulfur cluster insertion protein ErpA (130 aa).

Iron-sulfur cluster-binding residues include cysteine 58, cysteine 122, and cysteine 124.

This sequence belongs to the HesB/IscA family. As to quaternary structure, homodimer. Requires iron-sulfur cluster as cofactor.

In terms of biological role, required for insertion of 4Fe-4S clusters for at least IspG. This Stenotrophomonas maltophilia (strain K279a) protein is Iron-sulfur cluster insertion protein ErpA.